Here is a 408-residue protein sequence, read N- to C-terminus: 5-hydroxytryptamine receptor 1A (408 aa).

Topologically, residues 1 to 32 (MDASNNTTSWNILQRGRMGPSWRRCPVSYQII) are extracellular. 2 N-linked (GlcNAc...) asparagine glycosylation sites follow: Asn5 and Asn6. The chain crosses the membrane as a helical span at residues 33 to 53 (ASLFLGRSFSAGIFGNACVIA). Residues 54-67 (AIALERSLQNVANY) lie on the Cytoplasmic side of the membrane. The helical transmembrane segment at 68 to 92 (LIGSLAVTDLMVSVLVLPMAAQNQV) threads the bilayer. Topologically, residues 93-101 (LNKWTLGQV) are extracellular. The chain crosses the membrane as a helical span at residues 102 to 126 (TCDIFISLDVLCCTSSILHLCAIAL). Cys103 and Cys181 are oxidised to a cystine. Serotonin-binding residues include Asp110 and Cys114. Residues 127-129 (DRY) carry the DRY motif; important for ligand-induced conformation changes motif. Over 127 to 146 (DRYWAITDPIDYVNKRTPRR) the chain is Cytoplasmic. A helical transmembrane segment spans residues 147–168 (AAVLISITWIVGFSISIPPMLG). The Extracellular portion of the chain corresponds to 169 to 187 (WRTPEDRSDPNACRISEDP). Residues 188 to 210 (GYTIYSTFGAFYIPLILMLVLYG) form a helical membrane-spanning segment. At 211–333 (KIFKAARFRI…LARERKTVKT (123 aa)) the chain is on the cytoplasmic side. Positions 235 to 255 (TCLSVSQQSPKEKQRGAQQEL) are disordered. 1D-myo-inositol 4-phosphate is bound by residues Lys332, Thr333, and Gly339. Residues 334-357 (LGIIMGTFILCWLPFFIVALVLPF) form a helical membrane-spanning segment. At 358–364 (CETCHMP) the chain is on the extracellular side. A helical membrane pass occupies residues 365–389 (HLLFDIITWLGYSNSLLNPIIYAYF). Residues 382–386 (NPIIY) carry the NPxxY motif; important for ligand-induced conformation changes and signaling motif. The 1D-myo-inositol 4-phosphate site is built by Phe389, Asn390, and Lys391. Topologically, residues 390 to 408 (NKDFQSAFKKIIKCKFCRQ) are cytoplasmic.

The protein belongs to the G-protein coupled receptor 1 family. 5-hydroxytryptamine receptor subfamily. HTR1A sub-subfamily. First expressed in the rostral part of the brain stem at stage 22. At later stages of development, expression is localized to serotonergic neurons. The expression pattern changes in the tadpole of stage 41 where, in addition to serotonergic neurons, expression is also localized to the inner nuclear layer (INL) of the developing retina. This expression pattern continues through to the start of metamorphosis (stage 46). In adults, expressed in the brain, in particular the telencephalon, diencephalon and mesencephalon. In the telencephalic region, expression is localized to the lateral, dorsal and medial pallium, and in the striatum, septum and amygdala. In the mesencephalic region, expression is strongest in the optic tectum and torus semicircularis with moderate levels of expression in tegmental nuclei. In diencephalon, localized to the dorsal and ventral thalamus and the preoptic area of the hypothalamus.

It localises to the cell membrane. Its activity is regulated as follows. G-protein coupled receptor activity is regulated by lipids: phosphatidylinositol 4-phosphate increases HTR1A-mediated activity. Functionally, G-protein coupled receptor for 5-hydroxytryptamine (serotonin). Also functions as a receptor for various drugs and psychoactive substances. Ligand binding causes a conformation change that triggers signaling via guanine nucleotide-binding proteins (G proteins) and modulates the activity of downstream effectors, such as adenylate cyclase. HTR1A is coupled to G(i)/G(o) G alpha proteins and mediates inhibitory neurotransmission: signaling inhibits adenylate cyclase activity and activates a phosphatidylinositol-calcium second messenger system that regulates the release of Ca(2+) ions from intracellular stores. Beta-arrestin family members regulate signaling by mediating both receptor desensitization and resensitization processes. Activation of the receptor may play a role in the exit from G0 phase and in promoting DNA synthesis. The chain is 5-hydroxytryptamine receptor 1A from Xenopus laevis (African clawed frog).